Here is a 177-residue protein sequence, read N- to C-terminus: Large ribosomal subunit protein uL6 (177 aa).

The protein belongs to the universal ribosomal protein uL6 family. Part of the 50S ribosomal subunit.

This protein binds to the 23S rRNA, and is important in its secondary structure. It is located near the subunit interface in the base of the L7/L12 stalk, and near the tRNA binding site of the peptidyltransferase center. This Methanosarcina barkeri (strain Fusaro / DSM 804) protein is Large ribosomal subunit protein uL6.